Here is a 315-residue protein sequence, read N- to C-terminus: Epithelial cell adhesion molecule (315 aa).

Residues 1-23 (MAPPKALAFGLLLAVVTATLAAA) form the signal peptide. Residues 24 to 266 (QKDCVCNNYK…APEFSMQGLT (243 aa)) are Extracellular-facing. 6 cysteine pairs are disulfide-bonded: C27-C46, C29-C59, C38-C48, C66-C99, C110-C116, and C118-C135. Residues 63 to 135 (ASKCLVMKAE…RTDKDTEITC (73 aa)) enclose the Thyroglobulin type-1 domain. N111 is a glycosylation site (N-linked (GlcNAc...) asparagine). N198 carries N-linked (GlcNAc...) asparagine glycosylation. The helical transmembrane segment at 267-289 (AGIIAVIVVVVLAVIAGIVVLVI) threads the bilayer. The Cytoplasmic portion of the chain corresponds to 290–315 (STRKRSAKYEKAEIKEMGEIHRELNA).

This sequence belongs to the EPCAM family. As to quaternary structure, monomer. Interacts with phosphorylated CLDN7. In terms of processing, glycosylation at Asn-198 is crucial for protein stability.

The protein resides in the lateral cell membrane. The protein localises to the cell junction. Its subcellular location is the tight junction. Functionally, may act as a physical homophilic interaction molecule between intestinal epithelial cells (IECs) and intraepithelial lymphocytes (IELs) at the mucosal epithelium for providing immunological barrier as a first line of defense against mucosal infection. Plays a role in embryonic stem cells proliferation and differentiation. Up-regulates the expression of FABP5, MYC and cyclins A and E. This Rattus norvegicus (Rat) protein is Epithelial cell adhesion molecule (Epcam).